Reading from the N-terminus, the 446-residue chain is Exodeoxyribonuclease 7 large subunit (446 aa).

It belongs to the XseA family. Heterooligomer composed of large and small subunits.

It localises to the cytoplasm. It carries out the reaction Exonucleolytic cleavage in either 5'- to 3'- or 3'- to 5'-direction to yield nucleoside 5'-phosphates.. Bidirectionally degrades single-stranded DNA into large acid-insoluble oligonucleotides, which are then degraded further into small acid-soluble oligonucleotides. This chain is Exodeoxyribonuclease 7 large subunit, found in Streptococcus pneumoniae serotype 19F (strain G54).